A 378-amino-acid chain; its full sequence is tRNA-specific 2-thiouridylase MnmA (378 aa).

ATP contacts are provided by residues 14 to 21 (AMSGGVDS) and L40. The active-site Nucleophile is the C109. An intrachain disulfide couples C109 to C208. ATP is bound at residue G133. Positions 156-158 (KDQ) are interaction with tRNA. Catalysis depends on C208, which acts as the Cysteine persulfide intermediate.

The protein belongs to the MnmA/TRMU family.

The protein localises to the cytoplasm. It carries out the reaction S-sulfanyl-L-cysteinyl-[protein] + uridine(34) in tRNA + AH2 + ATP = 2-thiouridine(34) in tRNA + L-cysteinyl-[protein] + A + AMP + diphosphate + H(+). Catalyzes the 2-thiolation of uridine at the wobble position (U34) of tRNA, leading to the formation of s(2)U34. This is tRNA-specific 2-thiouridylase MnmA from Streptomyces griseus subsp. griseus (strain JCM 4626 / CBS 651.72 / NBRC 13350 / KCC S-0626 / ISP 5235).